The sequence spans 178 residues: ATP synthase subunit b (178 aa).

A helical membrane pass occupies residues isoleucine 11–valine 31.

It belongs to the ATPase B chain family. In terms of assembly, F-type ATPases have 2 components, F(1) - the catalytic core - and F(0) - the membrane proton channel. F(1) has five subunits: alpha(3), beta(3), gamma(1), delta(1), epsilon(1). F(0) has three main subunits: a(1), b(2) and c(10-14). The alpha and beta chains form an alternating ring which encloses part of the gamma chain. F(1) is attached to F(0) by a central stalk formed by the gamma and epsilon chains, while a peripheral stalk is formed by the delta and b chains.

It is found in the cell membrane. Its function is as follows. F(1)F(0) ATP synthase produces ATP from ADP in the presence of a proton or sodium gradient. F-type ATPases consist of two structural domains, F(1) containing the extramembraneous catalytic core and F(0) containing the membrane proton channel, linked together by a central stalk and a peripheral stalk. During catalysis, ATP synthesis in the catalytic domain of F(1) is coupled via a rotary mechanism of the central stalk subunits to proton translocation. Component of the F(0) channel, it forms part of the peripheral stalk, linking F(1) to F(0). This is ATP synthase subunit b from Saccharopolyspora erythraea (strain ATCC 11635 / DSM 40517 / JCM 4748 / NBRC 13426 / NCIMB 8594 / NRRL 2338).